The sequence spans 637 residues: Sec1 family domain-containing protein 1 (637 aa).

3 positions are modified to phosphoserine: serine 32, serine 298, and serine 523.

The protein belongs to the STXBP/unc-18/SEC1 family. As to quaternary structure, interacts with STX17. Interacts with the COG complex via COG4. Interacts with STX5A. In terms of tissue distribution, highly expressed in testis. Detected at lower levels in brain, astrocytes, heart and small intestine.

The protein resides in the cytoplasm. The protein localises to the endoplasmic reticulum membrane. It localises to the golgi apparatus. It is found in the golgi stack membrane. Its function is as follows. Plays a role in SNARE-pin assembly and Golgi-to-ER retrograde transport via its interaction with COG4. Involved in vesicular transport between the endoplasmic reticulum and the Golgi. In Rattus norvegicus (Rat), this protein is Sec1 family domain-containing protein 1 (Scfd1).